The sequence spans 164 residues: MIRKVLLSVLLAVLMTINLGQASPEVMKNLCMNYGKAMDQCKQELNLPDSVIADLYNFWKDDYVMTDRLAGCAINCLSTKLDIVDPDGNLHHGNAKEFAMKHGADDGMAHELVDIIHGCEKSSPPNDDKCIKTMDIAMCFKKEIHKLNWVPNMDLVVGEVLAEV.

Residues Met-1–Ala-22 form the signal peptide. 3 disulfides stabilise this stretch: Cys-41–Cys-76, Cys-72–Cys-130, and Cys-119–Cys-139.

Belongs to the PBP/GOBP family. Antenna.

In terms of biological role, this major soluble protein in olfactory sensilla of male moths might serve to solubilize the extremely hydrophobic pheromone molecules and to transport pheromone through the aqueous lymph to receptors located on olfactory cilia. This Antheraea pernyi (Chinese oak silk moth) protein is Pheromone-binding protein 2.